Reading from the N-terminus, the 366-residue chain is tRNA/tmRNA (uracil-C(5))-methyltransferase (366 aa).

The S-adenosyl-L-methionine site is built by Q190, Y218, N223, E239, and D299. C324 (nucleophile) is an active-site residue. Catalysis depends on E358, which acts as the Proton acceptor.

It belongs to the class I-like SAM-binding methyltransferase superfamily. RNA M5U methyltransferase family. TrmA subfamily.

The enzyme catalyses uridine(54) in tRNA + S-adenosyl-L-methionine = 5-methyluridine(54) in tRNA + S-adenosyl-L-homocysteine + H(+). It catalyses the reaction uridine(341) in tmRNA + S-adenosyl-L-methionine = 5-methyluridine(341) in tmRNA + S-adenosyl-L-homocysteine + H(+). Dual-specificity methyltransferase that catalyzes the formation of 5-methyluridine at position 54 (m5U54) in all tRNAs, and that of position 341 (m5U341) in tmRNA (transfer-mRNA). The polypeptide is tRNA/tmRNA (uracil-C(5))-methyltransferase (Salmonella choleraesuis (strain SC-B67)).